The chain runs to 467 residues: Ribosomal RNA small subunit methyltransferase F (467 aa).

S-adenosyl-L-methionine is bound by residues 119-125, glutamate 143, aspartate 170, and aspartate 188; that span reads ASAPGSK. Cysteine 241 serves as the catalytic Nucleophile.

This sequence belongs to the class I-like SAM-binding methyltransferase superfamily. RsmB/NOP family.

The protein localises to the cytoplasm. It catalyses the reaction cytidine(1407) in 16S rRNA + S-adenosyl-L-methionine = 5-methylcytidine(1407) in 16S rRNA + S-adenosyl-L-homocysteine + H(+). Specifically methylates the cytosine at position 1407 (m5C1407) of 16S rRNA. The protein is Ribosomal RNA small subunit methyltransferase F of Shewanella amazonensis (strain ATCC BAA-1098 / SB2B).